Consider the following 1857-residue polypeptide: Peripheral-type benzodiazepine receptor-associated protein 1 (1857 aa).

3 disordered regions span residues 1–103 (MEQL…RPED), 284–321 (QRETLPLPPSWPPGPALQARAGAPAPGAPGEATPQEDA), and 565–629 (PKDL…DTAS). The segment covering 55–67 (LRSEESSKPKGDG) has biased composition (basic and acidic residues). Residues 87–96 (LGQQASSSGP) show a composition bias toward polar residues. Pro residues predominate over residues 289 to 298 (PLPPSWPPGP). Composition is skewed to low complexity over residues 299–316 (ALQARAGAPAPGAPGEAT) and 603–616 (SLSNSSHSESIHNS). The SH3 1 domain occupies 653–720 (ARIQVFLARY…PSNFVERVSD (68 aa)). The tract at residues 729–789 (PELADLSHSS…PSPEGLGEPP (61 aa)) is disordered. Residues 755-764 (GGQSSVGRSQ) show a composition bias toward low complexity. Fibronectin type-III domains lie at 791–882 (VPYP…ARAG), 884–976 (VPSQ…TLPA), and 981–1081 (APLD…LAPA). 3 disordered regions span residues 1083-1311 (LPAR…SDEE), 1330-1479 (FSIP…CSRG), and 1501-1601 (YDSE…RGVR). Residues 1098-1116 (ARAPLASASPGPGDPSSPL) are compositionally biased toward low complexity. Residues 1138-1147 (EMAKGSHEDP) show a composition bias toward basic and acidic residues. Residues 1201-1218 (ASSSTQGARAQQAPNTEM) show a composition bias toward polar residues. Over residues 1259-1274 (DIQEEEEEEEEEEEEE) the composition is skewed to acidic residues. The span at 1278 to 1292 (RTCSFQKQVAGNSIR) shows a compositional bias: polar residues. A compositionally biased stretch (acidic residues) spans 1333 to 1346 (PEEEEEEEEDEEEE). 2 stretches are compositionally biased toward basic and acidic residues: residues 1420–1429 (RPPDPREHCS) and 1554–1586 (AWEKGEPERRGRSATGRAKEPLSRATETGEARG). Positions 1625-1693 (LPVRIFVALF…PCNMVAEVAV (69 aa)) constitute an SH3 2 domain. Disordered regions lie at residues 1723–1761 (VYSTAHTTGPPPKPRRSKKAESEGPAQPCPGPPKLVPSA) and 1823–1857 (SNFLEGPGPEAGGLDREPRTPQAESQRTRRRRVQC). Residues 1764–1831 (KAPHSMVAAF…PSNFLEGPGP (68 aa)) form the SH3 3 domain.

The protein belongs to the RIMBP family. As to quaternary structure, interacts with RIMS1 and RIMS2. Interacts with TSPO. Interacts with CACNA1A. In terms of tissue distribution, predominantly expressed in brain, pituitary gland and thymus in adults. In adult brain, highest expression found in temporal lobe and the putamen, followed by amygdala, caudate nucleus, cerebral cortex, occipital and frontal lobe. A high expression level is also observed in fetal tissues like brain, heart, kidney and thymus.

It localises to the cytoplasm. The protein localises to the mitochondrion. Required for synaptic transmission regulation. It probably controls the recruitement of voltage-gated calcium channels to the presynaptic membrane, and modulates neurotransmitter release. The polypeptide is Peripheral-type benzodiazepine receptor-associated protein 1 (Homo sapiens (Human)).